The chain runs to 695 residues: Testis-specific Y-encoded-like protein 2 (695 aa).

The disordered stretch occupies residues 1–56; that stretch reads MDRPDEGPPAKTRRLSSSESPQRDPPPPPPPPPLLRLPLPPPQQRPRLQEETEAAQ. Residue K11 forms a Glycyl lysine isopeptide (Lys-Gly) (interchain with G-Cter in SUMO2) linkage. Phosphoserine occurs at positions 18 and 20. The span at 23 to 44 shows a compositional bias: pro residues; it reads RDPPPPPPPPPLLRLPLPPPQQ. Residues K163 and K165 each participate in a glycyl lysine isopeptide (Lys-Gly) (interchain with G-Cter in SUMO2) cross-link. Positions 175–207 are disordered; sequence EDEDEQESMRSSRRRRRRRRRKQRKVKRESRQR. Residues 185-202 show a composition bias toward basic residues; that stretch reads SSRRRRRRRRRKQRKVKR. Residue T340 is modified to Phosphothreonine. Disordered regions lie at residues 471-603 and 632-695; these read DINE…RDIE and VEEE…GKTG. Residues 481–491 show a composition bias toward basic and acidic residues; the sequence is SPDHDEVRNET. A compositionally biased stretch (acidic residues) spans 496 to 518; the sequence is ESADDNETTDNNESADDNNENPE. The segment covering 519-535 has biased composition (basic and acidic residues); the sequence is DNNKNADDNKENPDNNK. The span at 539 to 557 shows a compositional bias: low complexity; sequence GNNFFNGGFWGSHGNNQDS. 2 stretches are compositionally biased toward acidic residues: residues 558–601 and 632–677; these read SDSD…DDRD and VEEE…DLED. S670 and S673 each carry phosphoserine.

Belongs to the nucleosome assembly protein (NAP) family. As to quaternary structure, interacts with histones. Interacts with CASK. Part of a complex containing CASK, TBR1 and TSPYL2. Phosphorylation at Ser-20 and/or Thr-340 impairs function on cell proliferation. Ubiquitously expressed, with highest levels in testis, adrenal gland, cerebral cortex, ovary, skeletal muscle and spleen. Present in testis, adrenal gland, cerebral cortex and ovary (at protein level).

The protein resides in the nucleus. It is found in the cytoplasm. Functionally, part of the CASK/TBR1/TSPYL2 transcriptional complex which modulates gene expression in response to neuronal synaptic activity, probably by facilitating nucleosome assembly. May inhibit cell proliferation by inducing p53-dependent CDKN1A expression. The protein is Testis-specific Y-encoded-like protein 2 (TSPYL2) of Macaca fascicularis (Crab-eating macaque).